Reading from the N-terminus, the 502-residue chain is Keratin, type II microfibrillar, component 5 (502 aa).

S1 is subject to Blocked amino end (Ser). The tract at residues 1 to 122 is head; the sequence is SCRSYRISPG…PNAQCVKHQE (122 aa). The IF rod domain maps to 122-433; sequence EKEQIKNLNS…RLLEGEEQRL (312 aa). The tract at residues 123 to 157 is coil 1A; it reads KEQIKNLNSRFAAFIDKVRFLEQQNKLLETKWQFY. Residues 158–167 are linker 1; it reads QNQRCCESNL. The interval 168–268 is coil 1B; it reads EPLFNGYIET…YDEEIQILNA (101 aa). K228 is covalently cross-linked (Glycyl lysine isopeptide (Lys-Gly) (interchain with G-Cter in SUMO1)). Positions 269-285 are linker 12; it reads HISDTSVIVKMDNSRDL. A coil 2 region spans residues 286 to 429; that stretch reads NMDCVVAEIK…ATYRRLLEGE (144 aa). A tail region spans residues 430–502; sequence EQRLCEGVGS…CGSSRSVRFA (73 aa).

This sequence belongs to the intermediate filament family. As to expression, hard keratin wool.

In terms of biological role, wool microfibrillar keratin. This Ovis aries (Sheep) protein is Keratin, type II microfibrillar, component 5.